Reading from the N-terminus, the 315-residue chain is Hydroxysteroid 11-beta-dehydrogenase 1-like protein (315 aa).

Residues Met-1 to Ala-15 form the signal peptide. NADP(+) contacts are provided by residues Gly-36 to Thr-62, Asp-87 to Met-88, and Asn-114 to Ile-116. Substrate is bound at residue Ser-165. Tyr-178 (proton acceptor) is an active-site residue. NADP(+) is bound by residues Tyr-178–Lys-182 and Gly-211–Ser-217. Residues Ala-221–Leu-286 form a disordered region. Over residues Ser-277–Leu-286 the composition is skewed to basic and acidic residues.

Belongs to the short-chain dehydrogenases/reductases (SDR) family. In terms of tissue distribution, highly expressed in the brain.

It localises to the secreted. The enzyme catalyses cortisone + NADPH + H(+) = cortisol + NADP(+). Its function is as follows. Unidirectional NADP(+)-dependent cortisol dehydrogenase (in vitro). The polypeptide is Hydroxysteroid 11-beta-dehydrogenase 1-like protein (HSD11B1L) (Homo sapiens (Human)).